The sequence spans 63 residues: Small ribosomal subunit protein eS17 (63 aa).

The protein belongs to the eukaryotic ribosomal protein eS17 family.

In Methanococcus maripaludis (strain C7 / ATCC BAA-1331), this protein is Small ribosomal subunit protein eS17.